An 85-amino-acid chain; its full sequence is MAHKKGQGSTQNNRDSIGRRLGVKKFGGEFVRAGNIIIRQRGTATHAGNNVGLGKDHTIFALVDGFVKFERLDKNRKKVSVYPAA.

It belongs to the bacterial ribosomal protein bL27 family.

The polypeptide is Large ribosomal subunit protein bL27 (Campylobacter concisus (strain 13826)).